Consider the following 381-residue polypeptide: Queuine tRNA-ribosyltransferase (381 aa).

Residue aspartate 92 is the Proton acceptor of the active site. Substrate is bound by residues 92 to 96, aspartate 146, glutamine 190, and glycine 217; that span reads DSGGF. The RNA binding stretch occupies residues 248–254; that stretch reads GVGRPED. Aspartate 267 serves as the catalytic Nucleophile. Residues 272 to 276 form an RNA binding; important for wobble base 34 recognition region; the sequence is TRNAR. Zn(2+)-binding residues include cysteine 305, cysteine 307, cysteine 310, and histidine 337.

The protein belongs to the queuine tRNA-ribosyltransferase family. Homodimer. Within each dimer, one monomer is responsible for RNA recognition and catalysis, while the other monomer binds to the replacement base PreQ1. The cofactor is Zn(2+).

The enzyme catalyses 7-aminomethyl-7-carbaguanine + guanosine(34) in tRNA = 7-aminomethyl-7-carbaguanosine(34) in tRNA + guanine. It participates in tRNA modification; tRNA-queuosine biosynthesis. In terms of biological role, catalyzes the base-exchange of a guanine (G) residue with the queuine precursor 7-aminomethyl-7-deazaguanine (PreQ1) at position 34 (anticodon wobble position) in tRNAs with GU(N) anticodons (tRNA-Asp, -Asn, -His and -Tyr). Catalysis occurs through a double-displacement mechanism. The nucleophile active site attacks the C1' of nucleotide 34 to detach the guanine base from the RNA, forming a covalent enzyme-RNA intermediate. The proton acceptor active site deprotonates the incoming PreQ1, allowing a nucleophilic attack on the C1' of the ribose to form the product. After dissociation, two additional enzymatic reactions on the tRNA convert PreQ1 to queuine (Q), resulting in the hypermodified nucleoside queuosine (7-(((4,5-cis-dihydroxy-2-cyclopenten-1-yl)amino)methyl)-7-deazaguanosine). The protein is Queuine tRNA-ribosyltransferase of Xanthomonas euvesicatoria pv. vesicatoria (strain 85-10) (Xanthomonas campestris pv. vesicatoria).